The primary structure comprises 774 residues: Acetyl-CoA decarbonylase/synthase complex subunit alpha (774 aa).

Residues C73, C76, C77, C79, C84, and C94 each contribute to the [4Fe-4S] cluster site. H117 is a binding site for CO. [Ni-4Fe-4S] cluster is bound by residues H251, C279, and C318. 2 4Fe-4S ferredoxin-type domains span residues 398–427 (LNEV…VKEA) and 436–466 (FKGF…VSMT). The [4Fe-4S] cluster site is built by C408, C411, C414, C418, C446, C449, C452, and C456. Residues C514, C543, and C578 each contribute to the [Ni-4Fe-4S] cluster site.

This sequence belongs to the Ni-containing carbon monoxide dehydrogenase family. Heterotetramer of two alpha and two epsilon subunits. The ACDS complex is made up of alpha, epsilon, beta, gamma and delta subunits with a probable stoichiometry of (alpha(2)epsilon(2))(4)-beta(8)-(gamma(1)delta(1))(8). [4Fe-4S] cluster is required as a cofactor. The cofactor is [Ni-4Fe-4S] cluster.

It catalyses the reaction CO + 2 oxidized [2Fe-2S]-[ferredoxin] + H2O = 2 reduced [2Fe-2S]-[ferredoxin] + CO2 + 2 H(+). Its function is as follows. Part of the ACDS complex that catalyzes the reversible cleavage of acetyl-CoA, allowing autotrophic growth from CO(2). The alpha-epsilon subcomponent functions as a carbon monoxide dehydrogenase. This chain is Acetyl-CoA decarbonylase/synthase complex subunit alpha, found in Methanocaldococcus jannaschii (strain ATCC 43067 / DSM 2661 / JAL-1 / JCM 10045 / NBRC 100440) (Methanococcus jannaschii).